Here is a 392-residue protein sequence, read N- to C-terminus: Formate-dependent phosphoribosylglycinamide formyltransferase (392 aa).

Residues 22–23 (EL) and Glu82 each bind N(1)-(5-phospho-beta-D-ribosyl)glycinamide. Residues Arg114, Lys155, 160-165 (SSGKGQ), 195-198 (EGVV), and Glu203 contribute to the ATP site. The ATP-grasp domain maps to 119-308 (RLAAEELGLP…EFALHVRAFL (190 aa)). Residues Glu267 and Glu279 each contribute to the Mg(2+) site. Residues Asp286, Lys355, and 362-363 (RR) contribute to the N(1)-(5-phospho-beta-D-ribosyl)glycinamide site.

The protein belongs to the PurK/PurT family. As to quaternary structure, homodimer.

The catalysed reaction is N(1)-(5-phospho-beta-D-ribosyl)glycinamide + formate + ATP = N(2)-formyl-N(1)-(5-phospho-beta-D-ribosyl)glycinamide + ADP + phosphate + H(+). The protein operates within purine metabolism; IMP biosynthesis via de novo pathway; N(2)-formyl-N(1)-(5-phospho-D-ribosyl)glycinamide from N(1)-(5-phospho-D-ribosyl)glycinamide (formate route): step 1/1. Its function is as follows. Involved in the de novo purine biosynthesis. Catalyzes the transfer of formate to 5-phospho-ribosyl-glycinamide (GAR), producing 5-phospho-ribosyl-N-formylglycinamide (FGAR). Formate is provided by PurU via hydrolysis of 10-formyl-tetrahydrofolate. This Salmonella dublin (strain CT_02021853) protein is Formate-dependent phosphoribosylglycinamide formyltransferase.